A 34-amino-acid polypeptide reads, in one-letter code: DDIT3 upstream open reading frame protein (34 aa).

Interacts with DDIT3 (isoform 1).

The protein resides in the nucleus. The protein localises to the cytoplasm. In terms of biological role, product of the upstream open reading frame (uORF) of DDIT3/CHOP that is specifically produced in absence of stress, thereby preventing translation of downstream stress effector DDIT3/CHOP. The chain is DDIT3 upstream open reading frame protein from Homo sapiens (Human).